Here is a 90-residue protein sequence, read N- to C-terminus: ATP synthase subunit c (90 aa).

Transmembrane regions (helical) follow at residues 4–24 and 53–73; these read FVYS…GCGI and IGLA…LILI.

It belongs to the ATPase C chain family. In terms of assembly, F-type ATPases have 2 components, F(1) - the catalytic core - and F(0) - the membrane proton channel. F(1) has five subunits: alpha(3), beta(3), gamma(1), delta(1), epsilon(1). F(0) has three main subunits: a(1), b(2) and c(10-14). The alpha and beta chains form an alternating ring which encloses part of the gamma chain. F(1) is attached to F(0) by a central stalk formed by the gamma and epsilon chains, while a peripheral stalk is formed by the delta and b chains.

Its subcellular location is the cell inner membrane. Its function is as follows. F(1)F(0) ATP synthase produces ATP from ADP in the presence of a proton or sodium gradient. F-type ATPases consist of two structural domains, F(1) containing the extramembraneous catalytic core and F(0) containing the membrane proton channel, linked together by a central stalk and a peripheral stalk. During catalysis, ATP synthesis in the catalytic domain of F(1) is coupled via a rotary mechanism of the central stalk subunits to proton translocation. Key component of the F(0) channel; it plays a direct role in translocation across the membrane. A homomeric c-ring of between 10-14 subunits forms the central stalk rotor element with the F(1) delta and epsilon subunits. This is ATP synthase subunit c from Syntrophobacter fumaroxidans (strain DSM 10017 / MPOB).